The sequence spans 404 residues: Trigger factor (404 aa).

A PPIase FKBP-type domain is found at 160–225 (KDHLFVRTEE…VLEVKTLKLP (66 aa)).

This sequence belongs to the FKBP-type PPIase family. Tig subfamily.

Its subcellular location is the cytoplasm. It catalyses the reaction [protein]-peptidylproline (omega=180) = [protein]-peptidylproline (omega=0). Involved in protein export. Acts as a chaperone by maintaining the newly synthesized protein in an open conformation. Functions as a peptidyl-prolyl cis-trans isomerase. The sequence is that of Trigger factor from Thermus thermophilus (strain ATCC BAA-163 / DSM 7039 / HB27).